Here is a 1161-residue protein sequence, read N- to C-terminus: Integrin alpha-D (1161 aa).

Residues Met-1–Gly-17 form the signal peptide. Residues Phe-18–Asn-1099 are Extracellular-facing. FG-GAP repeat units follow at residues Asn-19 to Pro-76 and Ile-77 to Thr-136. A glycan (N-linked (GlcNAc...) asparagine) is linked at Asn-59. Cys-67 and Cys-74 are joined by a disulfide. N-linked (GlcNAc...) asparagine glycosylation is found at Asn-87 and Asn-99. Cys-106 and Cys-124 form a disulfide bridge. The VWFA domain occupies Asp-150–Ile-332. 5 FG-GAP repeats span residues Gln-339 to Ile-390, Asn-391 to Trp-442, Arg-443 to Trp-503, Asp-506 to Ser-564, and Gln-569 to Val-629. N-linked (GlcNAc...) asparagine glycosylation occurs at Asn-391. Positions 465, 467, 469, 473, 529, 531, 533, 537, 592, 596, and 600 each coordinate Ca(2+). Cysteines 654 and 709 form a disulfide. Asn-690 and Asn-732 each carry an N-linked (GlcNAc...) asparagine glycan. 2 disulfide bridges follow: Cys-768-Cys-774 and Cys-845-Cys-860. Residues Asn-872 and Asn-956 are each glycosylated (N-linked (GlcNAc...) asparagine). Intrachain disulfides connect Cys-993/Cys-1017 and Cys-1022/Cys-1027. N-linked (GlcNAc...) asparagine glycosylation occurs at Asn-1045. Residues Ala-1100–Ala-1120 traverse the membrane as a helical segment. Topologically, residues Thr-1121–Ser-1161 are cytoplasmic. The short motif at Gly-1126–Arg-1130 is the GFFKR motif element.

The protein belongs to the integrin alpha chain family. In terms of assembly, heterodimer of an alpha and a beta subunit. Alpha-D associates with beta-2. In terms of tissue distribution, expressed moderately on myelomonocytic cell lines and subsets of peripheral blood leukocytes and strongly on tissue-specialized cells, including macrophages foam cells within atherosclerotic plaques, and on splenic red pulp macrophages.

It is found in the membrane. Its function is as follows. Integrin alpha-D/beta-2 is a receptor for ICAM3 and VCAM1. May play a role in the atherosclerotic process such as clearing lipoproteins from plaques and in phagocytosis of blood-borne pathogens, particulate matter, and senescent erythrocytes from the blood. This is Integrin alpha-D (ITGAD) from Homo sapiens (Human).